Here is an 83-residue protein sequence, read N- to C-terminus: Cytochrome b559 subunit alpha (83 aa).

The chain crosses the membrane as a helical span at residues 21 to 35 (VIHSITIPSLFIAGW). His-23 provides a ligand contact to heme.

It belongs to the PsbE/PsbF family. In terms of assembly, heterodimer of an alpha subunit and a beta subunit. PSII is composed of 1 copy each of membrane proteins PsbA, PsbB, PsbC, PsbD, PsbE, PsbF, PsbH, PsbI, PsbJ, PsbK, PsbL, PsbM, PsbT, PsbX, PsbY, PsbZ, Psb30/Ycf12, at least 3 peripheral proteins of the oxygen-evolving complex and a large number of cofactors. It forms dimeric complexes. Heme b is required as a cofactor.

It localises to the plastid. The protein resides in the chloroplast thylakoid membrane. Functionally, this b-type cytochrome is tightly associated with the reaction center of photosystem II (PSII). PSII is a light-driven water:plastoquinone oxidoreductase that uses light energy to abstract electrons from H(2)O, generating O(2) and a proton gradient subsequently used for ATP formation. It consists of a core antenna complex that captures photons, and an electron transfer chain that converts photonic excitation into a charge separation. This is Cytochrome b559 subunit alpha from Helianthus annuus (Common sunflower).